Reading from the N-terminus, the 72-residue chain is DNA-directed RNA polymerase subunit Rpo10 (72 aa).

C7, C10, C53, and C54 together coordinate Zn(2+).

The protein belongs to the archaeal Rpo10/eukaryotic RPB10 RNA polymerase subunit family. As to quaternary structure, part of the RNA polymerase complex. It depends on Zn(2+) as a cofactor.

The protein resides in the cytoplasm. It catalyses the reaction RNA(n) + a ribonucleoside 5'-triphosphate = RNA(n+1) + diphosphate. Its function is as follows. DNA-dependent RNA polymerase (RNAP) catalyzes the transcription of DNA into RNA using the four ribonucleoside triphosphates as substrates. This Thermoplasma acidophilum (strain ATCC 25905 / DSM 1728 / JCM 9062 / NBRC 15155 / AMRC-C165) protein is DNA-directed RNA polymerase subunit Rpo10.